A 778-amino-acid polypeptide reads, in one-letter code: Ribonucleoside-diphosphate reductase large subunit (778 aa).

Substrate-binding positions include S177, 192–193 (SC), G221, 419–423 (NLCIE), and 613–617 (PTATS). Cysteines 193 and 439 form a disulfide. The active-site Proton acceptor is the N419. C421 (cysteine radical intermediate) is an active-site residue. The active-site Proton acceptor is E423.

This sequence belongs to the ribonucleoside diphosphate reductase large chain family. Heterotetramer composed of a homodimer of the large subunit (R1) and a homodimer of the small subunit (R2). Larger multisubunit protein complex are also active, composed of (R1)n(R2)n.

The enzyme catalyses a 2'-deoxyribonucleoside 5'-diphosphate + [thioredoxin]-disulfide + H2O = a ribonucleoside 5'-diphosphate + [thioredoxin]-dithiol. With respect to regulation, under complex allosteric control mediated by deoxynucleoside triphosphates and ATP binding. The type of nucleotide bound at the specificity site determines substrate preference. It seems probable that ATP makes the enzyme reduce CDP and UDP, dGTP favors ADP reduction and dTTP favors GDP reduction. Ribonucleoside-diphosphate reductase holoenzyme provides the precursors necessary for viral DNA synthesis. Allows virus growth in non-dividing cells. Catalyzes the biosynthesis of deoxyribonucleotides from the corresponding ribonucleotides. This chain is Ribonucleoside-diphosphate reductase large subunit, found in Ornithodoros (relapsing fever ticks).